We begin with the raw amino-acid sequence, 241 residues long: Transcription initiation factor TFIID subunit 14 (241 aa).

One can recognise a YEATS domain in the interval Met1–Thr137. The segment at Pro141–Lys169 is disordered. The segment covering Glu149–Ser159 has biased composition (basic and acidic residues).

The protein belongs to the TAF14 family. In terms of assembly, component of the fcp1/TFIIF/polII complex via interaction of tfg3 with both tfg1/TFIIF-alpha and tfg2/TFIIF-beta subunits. Component of the SWI/SNF global transcription activator complex composed of at least arp9, arp42, snf5, snf22, snf30, sbf59, sol1, ssr1, ssr2, ssr3, ssr4 and tfg3. Also interacts with the TATA-binding protein (TBP). Component of the mst2 complex composed of at least eaf6, mst2, nto1, pdp3, ptf1, ptf2 and tfg3.

It is found in the nucleus. It localises to the nucleoplasm. Functionally, functions as a component of the DNA-binding general transcription factor complex TFIID, and the RNA polymerase II associated general transcription factor complex TFIIF. Binding of TFIID to a promoter (with or without TATA element) is the initial step in preinitiation complex (PIC) formation. TFIID plays a key role in the regulation of gene expression by RNA polymerase II through different activities such as transcription activator interaction, core promoter recognition and selectivity, TFIIA and TFIIB interaction, facilitation of DNA opening and initiation of transcription. TFIIF is essential for the initiation of transcription by RNA polymerase II. TFIIF functions include the recruitment of RNA polymerase II to the promoter bound DNA-TBP-TFIIB complex, decreasing the affinity of RNA polymerase II for non-specific DNA, allowing for the subsequent recruitment of TFIIE and TFIIH, and facilitating RNA polymerase II elongation. The TAF14 subunit has stimulatory activity. Component of the SWI/SNF complex, an ATP-dependent chromatin remodeling complex, required for the positive and negative regulation of gene expression of a large number of genes. It changes chromatin structure by altering DNA-histone contacts within a nucleosome, leading eventually to a change in nucleosome position, thus facilitating or repressing binding of gene-specific transcription factors. Component of the mst2 complex which is a highly specific H3 lysine 14 (H3K14) acetyltransferase that functions together with gcn5 to regulate global levels of H3K14 acetylation (H3K14ac), critical for DNA damage checkpoint activation. This Schizosaccharomyces pombe (strain 972 / ATCC 24843) (Fission yeast) protein is Transcription initiation factor TFIID subunit 14 (tfg3).